Reading from the N-terminus, the 141-residue chain is MSKALIKFIRLSPTKARLIAREVQGMNAELAMASLKFMPNKGAKYIANAISSAVANGGFEANEVIVKSCRVDAAAVLKRFRPRARGSASRIRKPTSHILVEVAKAEVKSEEKKTVAKKTTTTKAPAKKTTSTKKATVKKES.

Residues 108-141 (KSEEKKTVAKKTTTTKAPAKKTTSTKKATVKKES) are disordered. The span at 117 to 134 (KKTTTTKAPAKKTTSTKK) shows a compositional bias: low complexity.

It belongs to the universal ribosomal protein uL22 family. As to quaternary structure, part of the 50S ribosomal subunit.

Functionally, this protein binds specifically to 23S rRNA; its binding is stimulated by other ribosomal proteins, e.g. L4, L17, and L20. It is important during the early stages of 50S assembly. It makes multiple contacts with different domains of the 23S rRNA in the assembled 50S subunit and ribosome. Its function is as follows. The globular domain of the protein is located near the polypeptide exit tunnel on the outside of the subunit, while an extended beta-hairpin is found that lines the wall of the exit tunnel in the center of the 70S ribosome. The sequence is that of Large ribosomal subunit protein uL22 from Campylobacter jejuni subsp. jejuni serotype O:2 (strain ATCC 700819 / NCTC 11168).